We begin with the raw amino-acid sequence, 362 residues long: Zinc transporter 9 (362 aa).

The signal sequence occupies residues 1-21 (MAFDLKLTACLLLAVFSLAAA). Residues 22–42 (ADCECQPSDEGHDAAKSRTLK) are Extracellular-facing. A helical transmembrane segment spans residues 43-63 (VIAIFCILVGSSAGCAIPSLG). Residues 64–74 (RRFPALRPDTS) are Cytoplasmic-facing. A helical transmembrane segment spans residues 75–95 (LFFALKAFAAGVILATAFVHI). Over 96–120 (LPVSFDKLGSPCLVDGPWRKYPFTG) the chain is Extracellular. Residues 121–141 (LVAMLAAVATLLLDTIATGYF) form a helical membrane-spanning segment. Over 142 to 207 (LQRAQDSRGA…EDRAKLVRHR (66 aa)) the chain is Cytoplasmic. A helical transmembrane segment spans residues 208–228 (VISQVFELGIIVHSIIIGISL). The Extracellular portion of the chain corresponds to 229–239 (GASESPSTIRP). Residues 240 to 260 (LVAALTFHQFFEGIGLGGCIV) traverse the membrane as a helical segment. The Cytoplasmic portion of the chain corresponds to 261-269 (QARFHLKSA). The chain crosses the membrane as a helical span at residues 270–290 (VTMAIFFSLTTPVGIMIGIGI). Topologically, residues 291–301 (SSAYNENSPTA) are extracellular. A helical transmembrane segment spans residues 302 to 322 (LIVEGILDAAAAGILNYMALV). At 323 to 341 (DLLAEDFMNPRVRKSGRLQ) the chain is on the cytoplasmic side. A helical transmembrane segment spans residues 342–362 (LIISILLLVGIALMSLLGIWA).

Belongs to the ZIP transporter (TC 2.A.5) family.

It localises to the cell membrane. In terms of biological role, zinc transporter that may be involved in zinc uptake from the rhizosphere. The chain is Zinc transporter 9 (ZIP9) from Oryza sativa subsp. japonica (Rice).